A 406-amino-acid polypeptide reads, in one-letter code: L-cysteine:1D-myo-inositol 2-amino-2-deoxy-alpha-D-glucopyranoside ligase (406 aa).

Zn(2+) is bound at residue Cys45. Residues 45–48 (CGIT), Thr60, and 83–85 (NIT) contribute to the L-cysteinyl-5'-AMP site. The short motif at 47–57 (ITPYDATHMGH) is the 'HIGH' region element. The short motif at 185–190 (ERGGDP) is the 'ERGGDP' region element. Trp225 serves as a coordination point for L-cysteinyl-5'-AMP. Zn(2+) is bound at residue Cys229. 247–249 (GSD) is a binding site for L-cysteinyl-5'-AMP. His254 serves as a coordination point for Zn(2+). L-cysteinyl-5'-AMP is bound at residue Val281. The short motif at 287–291 (KMSKS) is the 'KMSKS' region element.

It belongs to the class-I aminoacyl-tRNA synthetase family. MshC subfamily. In terms of assembly, monomer. Zn(2+) is required as a cofactor.

It carries out the reaction 1D-myo-inositol 2-amino-2-deoxy-alpha-D-glucopyranoside + L-cysteine + ATP = 1D-myo-inositol 2-(L-cysteinylamino)-2-deoxy-alpha-D-glucopyranoside + AMP + diphosphate + H(+). Its function is as follows. Catalyzes the ATP-dependent condensation of GlcN-Ins and L-cysteine to form L-Cys-GlcN-Ins. The polypeptide is L-cysteine:1D-myo-inositol 2-amino-2-deoxy-alpha-D-glucopyranoside ligase (Kribbella flavida (strain DSM 17836 / JCM 10339 / NBRC 14399)).